The primary structure comprises 453 residues: Bifunctional protein GlmU (453 aa).

A pyrophosphorylase region spans residues 1–231 (MERSSLAVIL…EKELTGCNNR (231 aa)). Residues 10 to 13 (LAAG), Lys-24, Gln-77, 82 to 83 (GT), 105 to 107 (YGD), Gly-143, Glu-157, Asn-172, and Asn-229 each bind UDP-N-acetyl-alpha-D-glucosamine. Asp-107 contacts Mg(2+). Asn-229 contributes to the Mg(2+) binding site. A linker region spans residues 232–252 (AELAFIERLWQERRRHELMVD). An N-acetyltransferase region spans residues 253–453 (GVSMIAPETV…AQKEAKKKSS (201 aa)). Residues Arg-318 and Lys-336 each contribute to the UDP-N-acetyl-alpha-D-glucosamine site. His-348 serves as the catalytic Proton acceptor. Residues Tyr-351 and Asn-362 each coordinate UDP-N-acetyl-alpha-D-glucosamine. Residues Ala-365, 371 to 372 (NY), Ser-390, Ser-408, and Arg-425 contribute to the acetyl-CoA site.

The protein in the N-terminal section; belongs to the N-acetylglucosamine-1-phosphate uridyltransferase family. In the C-terminal section; belongs to the transferase hexapeptide repeat family. Homotrimer. Mg(2+) is required as a cofactor.

Its subcellular location is the cytoplasm. The catalysed reaction is alpha-D-glucosamine 1-phosphate + acetyl-CoA = N-acetyl-alpha-D-glucosamine 1-phosphate + CoA + H(+). It catalyses the reaction N-acetyl-alpha-D-glucosamine 1-phosphate + UTP + H(+) = UDP-N-acetyl-alpha-D-glucosamine + diphosphate. The protein operates within nucleotide-sugar biosynthesis; UDP-N-acetyl-alpha-D-glucosamine biosynthesis; N-acetyl-alpha-D-glucosamine 1-phosphate from alpha-D-glucosamine 6-phosphate (route II): step 2/2. It functions in the pathway nucleotide-sugar biosynthesis; UDP-N-acetyl-alpha-D-glucosamine biosynthesis; UDP-N-acetyl-alpha-D-glucosamine from N-acetyl-alpha-D-glucosamine 1-phosphate: step 1/1. It participates in bacterial outer membrane biogenesis; LPS lipid A biosynthesis. Functionally, catalyzes the last two sequential reactions in the de novo biosynthetic pathway for UDP-N-acetylglucosamine (UDP-GlcNAc). The C-terminal domain catalyzes the transfer of acetyl group from acetyl coenzyme A to glucosamine-1-phosphate (GlcN-1-P) to produce N-acetylglucosamine-1-phosphate (GlcNAc-1-P), which is converted into UDP-GlcNAc by the transfer of uridine 5-monophosphate (from uridine 5-triphosphate), a reaction catalyzed by the N-terminal domain. The sequence is that of Bifunctional protein GlmU from Agrobacterium fabrum (strain C58 / ATCC 33970) (Agrobacterium tumefaciens (strain C58)).